The sequence spans 405 residues: Glucose-1-phosphate adenylyltransferase (405 aa).

Alpha-D-glucose 1-phosphate contacts are provided by residues tyrosine 99, glycine 164, 179–180 (EK), and serine 197.

Belongs to the bacterial/plant glucose-1-phosphate adenylyltransferase family. In terms of assembly, homotetramer.

The enzyme catalyses alpha-D-glucose 1-phosphate + ATP + H(+) = ADP-alpha-D-glucose + diphosphate. It participates in glycan biosynthesis; glycogen biosynthesis. In terms of biological role, involved in the biosynthesis of ADP-glucose, a building block required for the elongation reactions to produce glycogen. Catalyzes the reaction between ATP and alpha-D-glucose 1-phosphate (G1P) to produce pyrophosphate and ADP-Glc. This Corynebacterium aurimucosum (strain ATCC 700975 / DSM 44827 / CIP 107346 / CN-1) (Corynebacterium nigricans) protein is Glucose-1-phosphate adenylyltransferase.